We begin with the raw amino-acid sequence, 483 residues long: Cobyric acid synthase (483 aa).

The 188-residue stretch at 251 to 438 (SLVVAVPMLP…LHGVFNADEF (188 aa)) folds into the GATase cobBQ-type domain. Residue cysteine 333 is the Nucleophile of the active site. Histidine 430 is a catalytic residue.

It belongs to the CobB/CobQ family. CobQ subfamily.

Its pathway is cofactor biosynthesis; adenosylcobalamin biosynthesis. Its function is as follows. Catalyzes amidations at positions B, D, E, and G on adenosylcobyrinic A,C-diamide. NH(2) groups are provided by glutamine, and one molecule of ATP is hydrogenolyzed for each amidation. The chain is Cobyric acid synthase from Brucella anthropi (strain ATCC 49188 / DSM 6882 / CCUG 24695 / JCM 21032 / LMG 3331 / NBRC 15819 / NCTC 12168 / Alc 37) (Ochrobactrum anthropi).